The following is a 191-amino-acid chain: Putative manganese efflux pump MntP (191 aa).

6 consecutive transmembrane segments (helical) span residues 3–23 (PISILLIGFAMSTDAFAAAIG), 37–57 (LRAGIIFGVIEAITPIIGWLL), 65–85 (VEAFDHWIAFGLLGALGIHMI), 107–129 (WKLALTGFATSIDAMAVGIGLAF), 144–164 (CTLTMVTAGIMFGRVLGSMVG), and 169–189 (IIGGVILVIIGATILYEHLHG).

Belongs to the MntP (TC 9.B.29) family.

The protein localises to the cell inner membrane. In terms of biological role, probably functions as a manganese efflux pump. This chain is Putative manganese efflux pump MntP, found in Stenotrophomonas maltophilia (strain K279a).